The following is a 262-amino-acid chain: Tetrahydromethanopterin S-methyltransferase subunit C (262 aa).

The next 7 membrane-spanning stretches (helical) occupy residues 27–47 (LVGIYIAHFFPSLAMLLGGLL), 72–92 (PSIGMVSLGMGTISALAGVLI), 98–118 (LPVLVTPILAAVIAVVVGFIV), 145–165 (ALAILGFCTAFAGGFSADIII), 173–193 (VIALAFIAAGMAILHPFNACI), 200–220 (KRTMTLAVACGFMAWLVFAIA), and 222–242 (LDIVSTAVAAIFWFIAYGTFV).

Belongs to the MtrC family. In terms of assembly, the complex is composed of 8 subunits; MtrA, MtrB, MtrC, MtrD, MtrE, MtrF, MtrG and MtrH.

It localises to the cell membrane. The enzyme catalyses 5-methyl-5,6,7,8-tetrahydromethanopterin + coenzyme M + 2 Na(+)(in) = 5,6,7,8-tetrahydromethanopterin + methyl-coenzyme M + 2 Na(+)(out). It functions in the pathway one-carbon metabolism; methanogenesis from CO(2); methyl-coenzyme M from 5,10-methylene-5,6,7,8-tetrahydromethanopterin: step 2/2. In terms of biological role, part of a complex that catalyzes the formation of methyl-coenzyme M and tetrahydromethanopterin from coenzyme M and methyl-tetrahydromethanopterin. This is an energy-conserving, sodium-ion translocating step. The protein is Tetrahydromethanopterin S-methyltransferase subunit C of Methanococcus maripaludis (strain C5 / ATCC BAA-1333).